A 198-amino-acid polypeptide reads, in one-letter code: Superoxide dismutase [Fe] (198 aa).

Fe(3+)-binding residues include His-27, His-74, Asp-157, and His-161.

This sequence belongs to the iron/manganese superoxide dismutase family. Homodimer. Requires Fe(3+) as cofactor.

The catalysed reaction is 2 superoxide + 2 H(+) = H2O2 + O2. Its function is as follows. Destroys superoxide anion radicals which are normally produced within the cells and which are toxic to biological systems. This chain is Superoxide dismutase [Fe] (sodB), found in Pseudomonas putida (Arthrobacter siderocapsulatus).